The following is a 75-amino-acid chain: Small ribosomal subunit protein eS28 (75 aa).

This sequence belongs to the eukaryotic ribosomal protein eS28 family.

This Natronomonas pharaonis (strain ATCC 35678 / DSM 2160 / CIP 103997 / JCM 8858 / NBRC 14720 / NCIMB 2260 / Gabara) (Halobacterium pharaonis) protein is Small ribosomal subunit protein eS28.